The primary structure comprises 145 residues: 3-dehydroquinate dehydratase (145 aa).

The active-site Proton acceptor is the tyrosine 23. Residues asparagine 74, histidine 80, and aspartate 87 each contribute to the substrate site. The Proton donor role is filled by histidine 100. Residues 101-102 (LS) and arginine 111 contribute to the substrate site.

Belongs to the type-II 3-dehydroquinase family. Homododecamer.

The enzyme catalyses 3-dehydroquinate = 3-dehydroshikimate + H2O. Its pathway is metabolic intermediate biosynthesis; chorismate biosynthesis; chorismate from D-erythrose 4-phosphate and phosphoenolpyruvate: step 3/7. Catalyzes a trans-dehydration via an enolate intermediate. This is 3-dehydroquinate dehydratase from Bacillus licheniformis (strain ATCC 14580 / DSM 13 / JCM 2505 / CCUG 7422 / NBRC 12200 / NCIMB 9375 / NCTC 10341 / NRRL NRS-1264 / Gibson 46).